Reading from the N-terminus, the 1644-residue chain is MSSVKVAVRVRPFNSREISRESKCIIEMSGNTTCITNPKVPPGTSDSIKRFNYDYSYWSHDPRDAEFSTQSMVYADIGEEMLQHSFDGYNVCIFAYGQTGAGKSYTMMGKQEESQEGVIPMICKDLFRRIQETEGVDLKYSVEVSYMEIYCERVRDLLNPKNKGNLKVREHPLLGPYVEDLSKLAVTSYQDIHDLIDEGNKARTVAATNMNETSSRSHAVFTIFFTQRRVDKMTSLETEKVSKISLVDLAGSERADSTGAKGTRLKEGANINKSLTTLGKVISALAEVASKSKKSKKADFIPYRDSVLTWLLRENLGGNSKTAMIAAISPADINYDETLSTLRYADRAKQIVCKAVVNEDANAKLIRELKEEIQKLRELLKAEGIEVQEGNRRTPTPMICSPNRLRKRTGSSTEMAVDQLQASEKLIAELNETWEEKLKRTEQIRLQREAVFAEMGVAVKEDGITVGVFSPKKSPHLVNLNEDPTLSECLLYYIKDGLTRLGTSEANVPQDIQLSGSHILKEHCVFENKDGVVTLVPHKDALVYLNGRKLVEPEVLQTGSRVILGKNHVFRFTHPEQAREKREKPKDKDVGENPGGNAEAADWNFAQCELLEKQGIDLKAEMQKRLCALEEQFKREKLAADQEFEEQRKTYEARIDALQKQVEEQSMTMSMYSSYSPEDFHQEEDIFVNPLFESCWTAREAGLAAWAFRKWRYHQFTSLRDDLWGNAIFLKEANAISVELKKKVQFQFTLLTDTLYSPLPPELAPSPIIGGALTNGQEDEFGQSPIPRTIVAVEVTDTKNGATHHWSLDKLRQRLELMREMYHNEAELSPTSPDYNVESLTGGDPFYDRFPWFRMVGRSFVYLSNLLYPVPLVHKVAIVNERGDVRGYLRVAVQPVMDEENADFNNGVKQSARIVFDEEQNGGHKIPKIRTIHDKDEKYIEGSNDIMKLEELEQEDADSGRGDSSVASELHESNEHEPGEHLQPGKEFTFRVTVLQATGIAAEYADIFCQFNFLHRHEEAFSTEPVKNSGSGAPLGFYHVQNITVPVTKSFIEYLKTQPIVFKVFGHYQNHPLHKDAKQDCQITRPPPRRMLPPSIPISQPVRSPKFGPLPCPPSSTVLAKHDVLVWFEICELAPNGEYVPAVVDHSDDLPCRGLYLLHQGIQRRIRITIVHEPTAEVKWKDIRELVVGRIRNQPEPADELDDSDSCVLSLGLFPGEVLEVPGDDRSFFRFEAAWDSSLHNSALLNRVTQTGEQIFITLSAYLELENCARPAIITKDLSMIIYGRDARTGPRSLKHLFSGQYRNPEANRLSGVYELSLRRASEAGSPGVQRRQRRVLDTSSTYVRGEENLHGWRPRGDSLIFDHQWELEKLTRLEEVGRVRHLLMLRERLGMDTTPNPTTKTEKDVCNLAQRASASPVHMVIPPSPQTPVKDQQTPTLPERELTPRETELVWKCVKLIQGRIGGKGDPSDTSNQLAVDASPGDEGCADMNASYISGNSIELCSPDRVDIPNGWEAPAPVPQSQEVSLRLYVPELEEIRVSPVVARKGYLNVLEHGGSGWKKRWVTVRRPYVFIFRSDKDPVERAVLNLATAQVECSEDQAAMVKVPNTFSVVTKHRGYLLQTLGDKEVHDWLYAINPLLAGQIR.

Residues Ser-3–Ile-351 enclose the Kinesin motor domain. Gly-97–Ser-104 contributes to the ATP binding site. A coiled-coil region spans residues Asn-358–Glu-436. An FHA domain is found at Thr-499–Gly-565. Residues His-574–Gly-591 are compositionally biased toward basic and acidic residues. Positions His-574 to Ala-598 are disordered. Residues Glu-631–Tyr-672 are a coiled coil. Disordered stretches follow at residues Glu-953 to Gly-985 and His-1419 to Glu-1440. Residues Glu-969–Pro-984 show a composition bias toward basic and acidic residues. Over residues Thr-1428–Thr-1437 the composition is skewed to polar residues. In terms of domain architecture, PH spans Val-1542–Ala-1640.

Belongs to the TRAFAC class myosin-kinesin ATPase superfamily. Kinesin family. Unc-104 subfamily. In terms of assembly, monomer.

The protein resides in the cytoplasm. The protein localises to the cytoskeleton. Its function is as follows. Required for presynaptic maturation, has a role in axonal transport of dense-core vesicles carrying synaptic vesicle precursors, components required for the morphological transformation of axonal growth cones to mature boutons. The sequence is that of Kinesin-like protein unc-104 from Aedes aegypti (Yellowfever mosquito).